The primary structure comprises 292 residues: Phosphatidylserine decarboxylase proenzyme (292 aa).

Residues Asp-89, His-146, and Ser-252 each act as charge relay system; for autoendoproteolytic cleavage activity in the active site. Catalysis depends on Ser-252, which acts as the Schiff-base intermediate with substrate; via pyruvic acid; for decarboxylase activity. At Ser-252 the chain carries Pyruvic acid (Ser); by autocatalysis.

This sequence belongs to the phosphatidylserine decarboxylase family. PSD-B subfamily. Prokaryotic type I sub-subfamily. As to quaternary structure, heterodimer of a large membrane-associated beta subunit and a small pyruvoyl-containing alpha subunit. It depends on pyruvate as a cofactor. Post-translationally, is synthesized initially as an inactive proenzyme. Formation of the active enzyme involves a self-maturation process in which the active site pyruvoyl group is generated from an internal serine residue via an autocatalytic post-translational modification. Two non-identical subunits are generated from the proenzyme in this reaction, and the pyruvate is formed at the N-terminus of the alpha chain, which is derived from the carboxyl end of the proenzyme. The autoendoproteolytic cleavage occurs by a canonical serine protease mechanism, in which the side chain hydroxyl group of the serine supplies its oxygen atom to form the C-terminus of the beta chain, while the remainder of the serine residue undergoes an oxidative deamination to produce ammonia and the pyruvoyl prosthetic group on the alpha chain. During this reaction, the Ser that is part of the protease active site of the proenzyme becomes the pyruvoyl prosthetic group, which constitutes an essential element of the active site of the mature decarboxylase.

The protein resides in the cell membrane. The enzyme catalyses a 1,2-diacyl-sn-glycero-3-phospho-L-serine + H(+) = a 1,2-diacyl-sn-glycero-3-phosphoethanolamine + CO2. The protein operates within phospholipid metabolism; phosphatidylethanolamine biosynthesis; phosphatidylethanolamine from CDP-diacylglycerol: step 2/2. Functionally, catalyzes the formation of phosphatidylethanolamine (PtdEtn) from phosphatidylserine (PtdSer). The chain is Phosphatidylserine decarboxylase proenzyme from Shewanella sp. (strain ANA-3).